We begin with the raw amino-acid sequence, 74 residues long: U3-agatoxin-Ao1b (74 aa).

The signal sequence occupies residues 1 to 20 (MKAAISLIIFFAILFVVIEA). The propeptide occupies 21 to 34 (ISYEEGKELFQKER). Cystine bridges form between Cys37/Cys53, Cys44/Cys58, Cys52/Cys68, and Cys60/Cys66. At Ser72 the chain carries Serine amide.

The protein belongs to the neurotoxin 07 (Beta/delta-agtx) family. 02 (aga-3) subfamily. As to expression, expressed by the venom gland.

Its subcellular location is the secreted. In terms of biological role, insecticidal neurotoxin that induces an irreversible spastic paralysis when injected into insects. Modifies presynaptic voltage-gated sodium channels (Nav), causing them to open at the normal resting potential of the nerve. This leads to spontaneous release of neurotransmitter and repetitive action potentials in motor neurons. This Agelena orientalis (Funnel-web spider) protein is U3-agatoxin-Ao1b.